The following is a 160-amino-acid chain: MSRRRRANKRVITPDSKYNSVLLARFINVIMRSGERSIAEKIVYGALSKAENRIGESAMSVFSSALNNVMPQMEVRSRRIGGVTYQVPVEVKEDRSVSLALRWISRAAATARKRSNKMYMDCLCNELLEAYNKRGGAYKIREEKYKMAEANKAFSHFRFN.

This sequence belongs to the universal ribosomal protein uS7 family. In terms of assembly, part of the 30S ribosomal subunit. Contacts proteins S9 and S11.

Its function is as follows. One of the primary rRNA binding proteins, it binds directly to 16S rRNA where it nucleates assembly of the head domain of the 30S subunit. Is located at the subunit interface close to the decoding center, probably blocks exit of the E-site tRNA. In Ehrlichia ruminantium (strain Gardel), this protein is Small ribosomal subunit protein uS7.